The chain runs to 168 residues: MSEIPENSKVSIYSKNEKKARELIQKFSMKPMPGITRVTFRKKNNQIFAIDNPDVYKTQGGNYVVFGEPKVDDFTRRLARAQQQAASAAKDPQSIQADMAAAAAAPAAPAAPAAAPEEDEAGQVDESGLDGQDIELVMQQANVSRNKAVKALREHNSDIVNAIMSLSK.

The region spanning Ser-14 to Leu-78 is the NAC-A/B domain. The disordered stretch occupies residues Gln-83 to Leu-129. Positions Ala-100–Ala-115 are enriched in low complexity. The 40-residue stretch at Leu-129 to Lys-168 folds into the UBA domain.

It belongs to the NAC-alpha family. In terms of assembly, part of the nascent polypeptide-associated complex (NAC), consisting of EGD2 and EGD1. NAC associates with ribosomes via EGD1.

It localises to the cytoplasm. Its subcellular location is the nucleus. In terms of biological role, component of the nascent polypeptide-associated complex (NAC), a dynamic component of the ribosomal exit tunnel, protecting the emerging polypeptides from interaction with other cytoplasmic proteins to ensure appropriate nascent protein targeting. The NAC complex also promotes mitochondrial protein import by enhancing productive ribosome interactions with the outer mitochondrial membrane and blocks the inappropriate interaction of ribosomes translating non-secretory nascent polypeptides with translocation sites in the membrane of the endoplasmic reticulum. EGD2 may also be involved in transcription regulation. The chain is Nascent polypeptide-associated complex subunit alpha (EGD2) from Eremothecium gossypii (strain ATCC 10895 / CBS 109.51 / FGSC 9923 / NRRL Y-1056) (Yeast).